Here is a 483-residue protein sequence, read N- to C-terminus: 6-phosphogluconate dehydrogenase, decarboxylating (483 aa).

Residues 10 to 15 and 33 to 35 each bind NADP(+); these read GLAVMG and NRT. The residue at position 38 (K38) is an N6-acetyllysine. S57 bears the Phosphoserine mark. Residues 75 to 77 and N103 each bind NADP(+); that span reads VKA. Substrate-binding residues include N103, S129, and G131. S129 is modified (phosphoserine). Catalysis depends on K184, which acts as the Proton acceptor. 187 to 188 contributes to the substrate binding site; sequence HN. The active-site Proton donor is E191. Substrate-binding residues include Y192, K261, R288, R447, and H453. 478-481 contacts NADP(+); sequence SSSY.

This sequence belongs to the 6-phosphogluconate dehydrogenase family. Homodimer.

The protein localises to the cytoplasm. It carries out the reaction 6-phospho-D-gluconate + NADP(+) = D-ribulose 5-phosphate + CO2 + NADPH. The protein operates within carbohydrate degradation; pentose phosphate pathway; D-ribulose 5-phosphate from D-glucose 6-phosphate (oxidative stage): step 3/3. Functionally, catalyzes the oxidative decarboxylation of 6-phosphogluconate to ribulose 5-phosphate and CO(2), with concomitant reduction of NADP to NADPH. This chain is 6-phosphogluconate dehydrogenase, decarboxylating (PGD), found in Ovis aries (Sheep).